The chain runs to 376 residues: TATA box-binding protein-like 2 (376 aa).

Residues 103 to 184 (PDEVTQENKD…SDSLSLASIT (82 aa)) form a disordered region. The segment covering 108 to 122 (QENKDQPVISKHETE) has biased composition (basic and acidic residues). The span at 126–159 (ESQSPQSRLPSPSEQDVGLGLNSSSLSNSHSQLH) shows a compositional bias: low complexity. The span at 175–184 (SDSLSLASIT) shows a compositional bias: polar residues.

This sequence belongs to the TBP family. As to quaternary structure, interacts with TAF3.

The protein localises to the cytoplasm. It localises to the nucleus. Transcription factor required in complex with TAF3 for the differentiation of myoblasts into myocytes. The complex replaces TFIID at specific promoters at an early stage in the differentiation process. The protein is TATA box-binding protein-like 2 of Pan troglodytes (Chimpanzee).